We begin with the raw amino-acid sequence, 1102 residues long: Voltage-gated delayed rectifier potassium channel KCNH8 (1102 aa).

Residues 1 to 225 (MPVMKGLLAP…HFSTFKAGWD (225 aa)) are Cytoplasmic-facing. In terms of domain architecture, PAS spans 18 to 90 (IATRFDGTHS…LQIEKSLEEK (73 aa)). The PAC domain occupies 93 to 145 (FKGEIMFYKKNGAPFWCLLDIVPIKNEKGDVVLFLASFKDITDTKVKITSEDK). Positions 142-151 (SEDKKEDRTK) are enriched in basic and acidic residues. The tract at residues 142–162 (SEDKKEDRTKGRSRAGSHFDS) is disordered. Residues 226-246 (WLILLATFYVAVTVPYNVCFI) form a helical membrane-spanning segment. Topologically, residues 247 to 255 (GNEDLSTTR) are extracellular. The chain crosses the membrane as a helical span at residues 256 to 276 (STTVSDIAVEILFIIDIILNF). Topologically, residues 277-298 (RTTYVSKSGQVIFEARSICIHY) are cytoplasmic. The chain crosses the membrane as a helical span at residues 299-319 (VTTWFIIDLIAALPFDLLYAF). A glycan (N-linked (GlcNAc...) asparagine) is linked at N320. Over 320–327 (NVTVVSLV) the chain is Extracellular. Residues 328 to 348 (HLLKTVRLLRLLRLLQKLDRY) form a helical; Voltage-sensor membrane-spanning segment. Residues 349 to 357 (SQHSTIVLT) are Cytoplasmic-facing. Residues 358 to 378 (LLMSMFALLAHWMACIWYVIG) form a helical membrane-spanning segment. The Extracellular segment spans residues 379–419 (KMEREDNSLLKWEVGWLHELGKRLESPYYGNNTLGGPSIRS). N-linked (GlcNAc...) asparagine glycosylation occurs at N409. The segment at residues 420-440 (AYIAALYFTLSSLTSVGFGNV) is an intramembrane region (pore-forming). A Selectivity filter motif is present at residues 434–439 (SVGFGN). Residues 441–448 (SANTDAEK) are Extracellular-facing. A helical membrane pass occupies residues 449–469 (IFSICTMLIGALMHALVFGNV). Residues 470–1102 (TAIIQRMYSR…DVKDSKAINV (633 aa)) are Cytoplasmic-facing. The segment at 551–668 (LFECASRGCL…HKFVEDIQHD (118 aa)) is cNMP-binding domain. Residues 684-693 (RLSNKSTVSQ) show a composition bias toward polar residues. Disordered regions lie at residues 684 to 743 (RLSN…KKTG), 764 to 841 (HSPI…PEPR), and 960 to 991 (LVGSSPQRTEAHEQNPADSELHHSPNLDYSPS). Over residues 710-723 (VEDEEEEEVEEEET) the composition is skewed to acidic residues. Polar residues predominate over residues 724–737 (TSLSPIYTRGSSVS). Basic and acidic residues predominate over residues 968-984 (TEAHEQNPADSELHHSP).

This sequence belongs to the potassium channel family. H (Eag) (TC 1.A.1.20) subfamily. Kv12.1/KCNH8 sub-subfamily. As to quaternary structure, the potassium channel is probably composed of a homo- or heterotetrameric complex of pore-forming alpha subunits that can associate with modulating beta subunits.

It is found in the membrane. The enzyme catalyses K(+)(in) = K(+)(out). Its function is as follows. Pore-forming (alpha) subunit of a voltage-gated delayed rectifier potassium channel that mediates outward-rectifying potassium currents. Elicits a slowly activating, non-inactivating and slowly deactivation outwards potassium current at depolarizating voltages from -30 mV to +50mV. Shows no obvious change in the activation rate from different holding potentials. Activation is strongly dependent on the pH of the external solution. The sequence is that of Voltage-gated delayed rectifier potassium channel KCNH8 from Mus musculus (Mouse).